A 468-amino-acid chain; its full sequence is Mitochondrial distribution and morphology protein 10 (468 aa).

This sequence belongs to the MDM10 family. As to quaternary structure, component of the ER-mitochondria encounter structure (ERMES) or MDM complex, composed of MMM1, MDM10, MDM12 and MDM34. Associates with the mitochondrial outer membrane sorting assembly machinery SAM(core) complex.

It is found in the mitochondrion outer membrane. Its function is as follows. Component of the ERMES/MDM complex, which serves as a molecular tether to connect the endoplasmic reticulum and mitochondria. Components of this complex are involved in the control of mitochondrial shape and protein biogenesis and may function in phospholipid exchange. MDM10 is involved in the late assembly steps of the general translocase of the mitochondrial outer membrane (TOM complex). Functions in the TOM40-specific route of the assembly of outer membrane beta-barrel proteins, including the association of TOM40 with the receptor TOM22 and small TOM proteins. Can associate with the SAM(core) complex as well as the MDM12-MMM1 complex, both involved in late steps of the major beta-barrel assembly pathway, that is responsible for biogenesis of all outer membrane beta-barrel proteins. May act as a switch that shuttles between both complexes and channels precursor proteins into the TOM40-specific pathway. Plays a role in mitochondrial morphology and in the inheritance of mitochondria. This Blastomyces gilchristii (strain SLH14081) (Blastomyces dermatitidis) protein is Mitochondrial distribution and morphology protein 10.